A 359-amino-acid chain; its full sequence is 4'-phosphopantetheinyl transferase A (359 aa).

This sequence belongs to the P-Pant transferase superfamily.

It carries out the reaction apo-[ACP] + CoA = holo-[ACP] + adenosine 3',5'-bisphosphate + H(+). Its activity is regulated as follows. Activity is inhibited bythe antifunfal copmpounds PD 404,182, 6-nitroso-1,2-benzopyrone, and calmidazolium chloride with IC(50) values of 3.9 uM, 35.2 uM, and 19.2 uM, respectively. Its function is as follows. Acyl-carrier-protein synthase that transfers the 4'-phosphopantetheine moiety from coenzyme A to a Ser of an acyl-carrier-protein. The 4'-phosphopantetheine (4'-PPT) portion of CoA provides the essential prosthetic group for a number of carrier proteins and multi-domain enzymes, priming them for the acceptance of acyl building blocks in fatty acid synthesis and many aspects of secondary metabolism mediated by polyketide synthases (PKSs) and non-ribosomal peptide synthetases (NRPSs). PptA is able to transfer the cofactor to a broad range of enzymes with acyl- or peptidyl-carrier protein domains and activates target enzymes involved in the synthesis of lysine, but also secondary metabolites including gliotoxin, fumigaclavine C, fumiquinazole A, fumiquinazoline C, pyripyroprene A, fumagillin, the siderophores triacetylfusarinine C (TAFC) and ferricrocin (FC), and dihydroxy naphthalene (DHN)-melanin. Plays an essential role in virulence. This Aspergillus fumigatus (strain ATCC MYA-4609 / CBS 101355 / FGSC A1100 / Af293) (Neosartorya fumigata) protein is 4'-phosphopantetheinyl transferase A.